The sequence spans 274 residues: Dermonecrotic toxin SdSicTox-betaIIB1bii (274 aa).

Residue His-5 is part of the active site. 2 residues coordinate Mg(2+): Glu-25 and Asp-27. His-41 acts as the Nucleophile in catalysis. Disulfide bonds link Cys-45–Cys-51 and Cys-47–Cys-190. Asp-85 provides a ligand contact to Mg(2+).

This sequence belongs to the arthropod phospholipase D family. Class II subfamily. It depends on Mg(2+) as a cofactor. Expressed by the venom gland.

It is found in the secreted. The catalysed reaction is an N-(acyl)-sphingosylphosphocholine = an N-(acyl)-sphingosyl-1,3-cyclic phosphate + choline. The enzyme catalyses an N-(acyl)-sphingosylphosphoethanolamine = an N-(acyl)-sphingosyl-1,3-cyclic phosphate + ethanolamine. It catalyses the reaction a 1-acyl-sn-glycero-3-phosphocholine = a 1-acyl-sn-glycero-2,3-cyclic phosphate + choline. It carries out the reaction a 1-acyl-sn-glycero-3-phosphoethanolamine = a 1-acyl-sn-glycero-2,3-cyclic phosphate + ethanolamine. In terms of biological role, dermonecrotic toxins cleave the phosphodiester linkage between the phosphate and headgroup of certain phospholipids (sphingolipid and lysolipid substrates), forming an alcohol (often choline) and a cyclic phosphate. This toxin acts on sphingomyelin (SM). It may also act on ceramide phosphoethanolamine (CPE), lysophosphatidylcholine (LPC) and lysophosphatidylethanolamine (LPE), but not on lysophosphatidylserine (LPS), and lysophosphatidylglycerol (LPG). It acts by transphosphatidylation, releasing exclusively cyclic phosphate products as second products. Induces dermonecrosis, hemolysis, increased vascular permeability, edema, inflammatory response, and platelet aggregation. The protein is Dermonecrotic toxin SdSicTox-betaIIB1bii of Sicarius cf. damarensis (strain GJB-2008) (Six-eyed sand spider).